A 231-amino-acid chain; its full sequence is Cytochrome c oxidase subunit 2 (231 aa).

Over 1–30 the chain is Mitochondrial intermembrane; that stretch reads MNNFFQGYNLLFQHSLFASYMDWFHAFNCS. Residues 31–51 form a helical membrane-spanning segment; it reads LLLGVLVFVTLLFGYLIFSTF. Residues 52–64 lie on the Mitochondrial matrix side of the membrane; it reads YFKSKKIEYQFGE. Residues 65–85 traverse the membrane as a helical segment; sequence LLCSIFPTIILLMQMVPSLSL. Topologically, residues 86 to 231 are mitochondrial intermembrane; that stretch reads LYYYGLMNLD…FKSWCFGTME (146 aa). Cu cation is bound by residues His164, Cys199, Glu201, Cys203, His207, and Met210. Glu201 is a binding site for Mg(2+).

The protein belongs to the cytochrome c oxidase subunit 2 family. Component of the cytochrome c oxidase (complex IV, CIV), a multisubunit enzyme composed of a catalytic core of 3 subunits and several supernumerary subunits. The complex exists as a monomer or a dimer and forms supercomplexes (SCs) in the inner mitochondrial membrane with ubiquinol-cytochrome c oxidoreductase (cytochrome b-c1 complex, complex III, CIII). The cofactor is Cu cation.

Its subcellular location is the mitochondrion inner membrane. It carries out the reaction 4 Fe(II)-[cytochrome c] + O2 + 8 H(+)(in) = 4 Fe(III)-[cytochrome c] + 2 H2O + 4 H(+)(out). Functionally, component of the cytochrome c oxidase, the last enzyme in the mitochondrial electron transport chain which drives oxidative phosphorylation. The respiratory chain contains 3 multisubunit complexes succinate dehydrogenase (complex II, CII), ubiquinol-cytochrome c oxidoreductase (cytochrome b-c1 complex, complex III, CIII) and cytochrome c oxidase (complex IV, CIV), that cooperate to transfer electrons derived from NADH and succinate to molecular oxygen, creating an electrochemical gradient over the inner membrane that drives transmembrane transport and the ATP synthase. Cytochrome c oxidase is the component of the respiratory chain that catalyzes the reduction of oxygen to water. Electrons originating from reduced cytochrome c in the intermembrane space (IMS) are transferred via the dinuclear copper A center (CU(A)) of subunit 2 and heme A of subunit 1 to the active site in subunit 1, a binuclear center (BNC) formed by heme A3 and copper B (CU(B)). The BNC reduces molecular oxygen to 2 water molecules using 4 electrons from cytochrome c in the IMS and 4 protons from the mitochondrial matrix. This Caenorhabditis briggsae protein is Cytochrome c oxidase subunit 2 (cox-2).